A 343-amino-acid polypeptide reads, in one-letter code: Phosphate acyltransferase (343 aa).

The protein belongs to the PlsX family. As to quaternary structure, homodimer. Probably interacts with PlsY.

The protein resides in the cytoplasm. It catalyses the reaction a fatty acyl-[ACP] + phosphate = an acyl phosphate + holo-[ACP]. It functions in the pathway lipid metabolism; phospholipid metabolism. Its function is as follows. Catalyzes the reversible formation of acyl-phosphate (acyl-PO(4)) from acyl-[acyl-carrier-protein] (acyl-ACP). This enzyme utilizes acyl-ACP as fatty acyl donor, but not acyl-CoA. The sequence is that of Phosphate acyltransferase from Coxiella burnetii (strain Dugway 5J108-111).